Consider the following 233-residue polypeptide: Somatolactin (233 aa).

The N-terminal stretch at 1–24 is a signal peptide; the sequence is MNMMQVMQSVVWAVLLWPCLVSLG. Cystine bridges form between Cys-29/Cys-39, Cys-89/Cys-205, and Cys-222/Cys-230.

This sequence belongs to the somatotropin/prolactin family. Pituitary gland.

It is found in the secreted. Functionally, may be associated with ion regulation and reproduction. The chain is Somatolactin from Oncorhynchus keta (Chum salmon).